The sequence spans 286 residues: Bifunctional protein FolD (286 aa).

NADP(+) is bound by residues 166 to 168 (GAS) and Ile-232.

It belongs to the tetrahydrofolate dehydrogenase/cyclohydrolase family. Homodimer.

The enzyme catalyses (6R)-5,10-methylene-5,6,7,8-tetrahydrofolate + NADP(+) = (6R)-5,10-methenyltetrahydrofolate + NADPH. It catalyses the reaction (6R)-5,10-methenyltetrahydrofolate + H2O = (6R)-10-formyltetrahydrofolate + H(+). It functions in the pathway one-carbon metabolism; tetrahydrofolate interconversion. Functionally, catalyzes the oxidation of 5,10-methylenetetrahydrofolate to 5,10-methenyltetrahydrofolate and then the hydrolysis of 5,10-methenyltetrahydrofolate to 10-formyltetrahydrofolate. This Vibrio campbellii (strain ATCC BAA-1116) protein is Bifunctional protein FolD.